Reading from the N-terminus, the 243-residue chain is PF03932 family protein CutC (243 aa).

The protein belongs to the CutC family.

It localises to the cytoplasm. The sequence is that of PF03932 family protein CutC from Glaesserella parasuis serovar 5 (strain SH0165) (Haemophilus parasuis).